A 301-amino-acid chain; its full sequence is Rhodopsin (301 aa).

The Extracellular portion of the chain corresponds to 1–18; it reads LHMIHLHWYQYPPMNPIM. The chain crosses the membrane as a helical span at residues 19–43; the sequence is YPLLLVFMLITGILCLAGNFVTIWV. Over 44–55 the chain is Cytoplasmic; sequence FMNTKSLRTPAN. A helical membrane pass occupies residues 56-78; it reads LLVVNLAMSDFLMMFTMFPPMMI. Residues 79-92 are Extracellular-facing; it reads TCYYHTWTLGATFC. Cysteines 92 and 169 form a disulfide. Residues 93 to 115 traverse the membrane as a helical segment; sequence QVYAFLGNLCGCASIWTMVFITF. Residues 116–118 carry the 'Ionic lock' involved in activated form stabilization motif; it reads DRY. Over 116–134 the chain is Cytoplasmic; it reads DRYNVIVKGVAGEPLSTKK. A helical transmembrane segment spans residues 135–155; that stretch reads ATLWILTIWILSTTWCVAPFF. Residues 156–182 lie on the Extracellular side of the membrane; it reads GWNRYVPEGNLTGCGTDYLSQDILSRS. An N-linked (GlcNAc...) asparagine glycan is attached at Asn-165. Residues 183–204 form a helical membrane-spanning segment; sequence YLYIYSTWVYFLPLAITIYCYV. Over 205 to 245 the chain is Cytoplasmic; it reads VIIKAVAAHEKGMRDQAKKMGIKSLRNEEAQKTSAECRLAK. Residues 246–267 form a helical membrane-spanning segment; that stretch reads IAMTTVALWFIAWTPYLLINWV. The Extracellular segment spans residues 268 to 278; sequence GMFARSYLSPV. The chain crosses the membrane as a helical span at residues 279–300; the sequence is YTIWGYVFAKANAVYNPIVYAI. Lys-288 bears the N6-(retinylidene)lysine mark.

This sequence belongs to the G-protein coupled receptor 1 family. Opsin subfamily. Homodimer. Interacts with GNAQ. Contains one covalently linked retinal chromophore.

The protein localises to the cell projection. The protein resides in the rhabdomere membrane. Functionally, photoreceptor required for image-forming vision at low light intensity. Can use both retinal and 3-dehydroretinal as visual pigment. Light-induced isomerization of 11-cis to all-trans retinal triggers a conformational change that activates signaling via G-proteins. Signaling via GNAQ probably mediates the activation of phospholipase C. This Orconectes australis (Southern cave crayfish) protein is Rhodopsin (RHO).